Consider the following 66-residue polypeptide: MAIVPKRKTSKQRKHKRNTHSALDAQNLVTCKNCTSMIEQHVTCYRCGFYKGKKVAGYTCLNDRVQ.

Positions 1–19 (MAIVPKRKTSKQRKHKRNT) are enriched in basic residues. A disordered region spans residues 1–21 (MAIVPKRKTSKQRKHKRNTHS).

It belongs to the bacterial ribosomal protein bL32 family.

In Mycoplasmopsis synoviae (strain 53) (Mycoplasma synoviae), this protein is Large ribosomal subunit protein bL32.